The chain runs to 1128 residues: Transient receptor potential-gamma protein (1128 aa).

The Cytoplasmic portion of the chain corresponds to 1–325; sequence MMEEENTIRP…MALQAVDIIR (325 aa). 2 ANK repeats span residues 57–86 and 131–160; these read LGRT…DTKD and PDIT…VLPM. Residues 326–346 traverse the membrane as a helical segment; it reads IGIMFPIFSLAYILAPYSSIG. Topologically, residues 347–403 are extracellular; the sequence is QTMRKPFIKFICHSASYFTFLFLLMLASQRIETFIGGWFFADSSGMLNTMEELPTKR. A helical transmembrane segment spans residues 404–424; it reads GAKPTFIEWLILAWVSGLIWS. Over 425 to 444 the chain is Cytoplasmic; that stretch reads EVKQLWDVGLQEYLNDMWNV. A helical membrane pass occupies residues 445–465; that stretch reads IDFVTNSLYVATVALRVVSFF. Residues 466–492 are Extracellular-facing; sequence QVQKEMIYNSHATDLPRERWDAWDPML. The chain crosses the membrane as a helical span at residues 493 to 513; the sequence is ISEGLFSAANIFSSLKLVYIF. The Cytoplasmic portion of the chain corresponds to 514 to 535; that stretch reads SVNPHLGPLQVSLSRMVMDIMK. Residues 536–556 traverse the membrane as a helical segment; it reads FFFLYVLVLFAFGSGLNQLLW. Residues 557-629 are Extracellular-facing; that stretch reads YYADLEKKRC…GIKIFTRFWG (73 aa). A helical transmembrane segment spans residues 630-650; sequence MLMFGTYSVINIVVLLNLLIA. Residues 651 to 1128 are Cytoplasmic-facing; the sequence is MMNHSYQLIS…SCVSTTGAIG (478 aa). 2 disordered regions span residues 865–898 and 1064–1111; these read RQQS…TASS and AAEA…SVNS. Residues 878–893 are compositionally biased toward low complexity; the sequence is ESPTTPTAPQGTQGAA. The segment covering 1085-1111 has biased composition (polar residues); it reads TQSQHDSVETNSTFTLSIDPSNTSVNS.

This sequence belongs to the transient receptor (TC 1.A.4) family. STrpC subfamily. Interacts preferentially with trpl and interacts to a lower extent with trp. In terms of tissue distribution, expressed predominantly in the rhabdomeres of photoreceptor cells.

The protein localises to the cell projection. It localises to the rhabdomere membrane. In terms of biological role, a light-sensitive calcium channel that is required for inositide-mediated Ca(2+) entry in the retina during phospholipase C (PLC)-mediated phototransduction. Forms a regulated cation channel when heteromultimerized with trpl. The polypeptide is Transient receptor potential-gamma protein (Trpgamma) (Drosophila melanogaster (Fruit fly)).